The sequence spans 34 residues: Cytochrome b6-f complex subunit 7 (34 aa).

The chain crosses the membrane as a helical span at residues 9-27; the sequence is AILSFGLIFVGWGLGALLL.

Belongs to the PetM family. In terms of assembly, the 4 large subunits of the cytochrome b6-f complex are cytochrome b6, subunit IV (17 kDa polypeptide, PetD), cytochrome f and the Rieske protein, while the 4 small subunits are PetG, PetL, PetM and PetN. The complex functions as a dimer.

The protein resides in the cellular thylakoid membrane. Component of the cytochrome b6-f complex, which mediates electron transfer between photosystem II (PSII) and photosystem I (PSI), cyclic electron flow around PSI, and state transitions. The sequence is that of Cytochrome b6-f complex subunit 7 from Nostoc punctiforme (strain ATCC 29133 / PCC 73102).